Reading from the N-terminus, the 611-residue chain is MPPYRSRTTTHGRNMAGARGLWRATGMKDEDFGKPIIAVVNSFTQFVPGHVHLKDLGQLVAREIESAGGVAKEFNTIAVDDGIAMGHDGMLYSLPSRELIADSVEYMVNAHCADAMVCISNCDKITPGMLMAALRLNIPVVFVSGGPMEAGKVVWEDSVKKLDLVDAMVAAADDHYTDEQVKAIERSACPTCGSCSGMFTANSMNCLTEALGLSLPGNGSTLATHADRKRLFVEAGHLIVDLARRYYEQDDESVLPRSIATFSAFENAMTLDIAMGGSTNTVLHLLAAAQEAEIDFTMADIDRLSRRVPVLCKVAPAVSSVHMEDVHHAGGIMGILGQLDNAGLLTTSIPTVHSETLAKALDHWDVTRTNSEMVHKFYSAAPGGVPTQVAFSQERRFDKVDTDREKGVIHSKEHAFSQDGGLAVLYGNLAEDGCIVKTAGVDDSILKFSGPARIFESQDSAVLGILNGKIKPGDIVLIRYEGPRGGPGMQEMLYPTSYLKSKGLGKACALITDGRFSGGSSGLSIGHVSPEAAEGGTIGLVREGDIIDIDIPNRKIHLAVDDATLAERRAEQDAAGWKPAEERKRKISTALKAYAAMATSAARGAVRKLPD.

Asp81 is a binding site for Mg(2+). Cys122 contributes to the [2Fe-2S] cluster binding site. Residues Asp123 and Lys124 each coordinate Mg(2+). Lys124 is modified (N6-carboxylysine). Cys195 provides a ligand contact to [2Fe-2S] cluster. Glu491 is a binding site for Mg(2+). Ser517 serves as the catalytic Proton acceptor.

Belongs to the IlvD/Edd family. In terms of assembly, homodimer. Requires [2Fe-2S] cluster as cofactor. Mg(2+) is required as a cofactor.

It carries out the reaction (2R)-2,3-dihydroxy-3-methylbutanoate = 3-methyl-2-oxobutanoate + H2O. The catalysed reaction is (2R,3R)-2,3-dihydroxy-3-methylpentanoate = (S)-3-methyl-2-oxopentanoate + H2O. It functions in the pathway amino-acid biosynthesis; L-isoleucine biosynthesis; L-isoleucine from 2-oxobutanoate: step 3/4. The protein operates within amino-acid biosynthesis; L-valine biosynthesis; L-valine from pyruvate: step 3/4. Functionally, functions in the biosynthesis of branched-chain amino acids. Catalyzes the dehydration of (2R,3R)-2,3-dihydroxy-3-methylpentanoate (2,3-dihydroxy-3-methylvalerate) into 2-oxo-3-methylpentanoate (2-oxo-3-methylvalerate) and of (2R)-2,3-dihydroxy-3-methylbutanoate (2,3-dihydroxyisovalerate) into 2-oxo-3-methylbutanoate (2-oxoisovalerate), the penultimate precursor to L-isoleucine and L-valine, respectively. This chain is Dihydroxy-acid dehydratase, found in Brucella melitensis biotype 1 (strain ATCC 23456 / CCUG 17765 / NCTC 10094 / 16M).